A 196-amino-acid polypeptide reads, in one-letter code: Chromophore lyase CpcS/CpeS 2 (196 aa).

Belongs to the CpcS/CpeS biliprotein lyase family.

Functionally, covalently attaches a chromophore to Cys residue(s) of phycobiliproteins. The sequence is that of Chromophore lyase CpcS/CpeS 2 from Trichodesmium erythraeum (strain IMS101).